Reading from the N-terminus, the 105-residue chain is Putative zinc finger protein 861 (105 aa).

A C2H2-type zinc finger spans residues 75 to 97 (YTCKPCGNAFRFHHSFHIHERPH).

The polypeptide is Putative zinc finger protein 861 (ZNF861P) (Homo sapiens (Human)).